Reading from the N-terminus, the 207-residue chain is Large ribosomal subunit protein uL4 (207 aa).

The disordered stretch occupies residues 48-75 (THAVKNRSAVSGGGRKPWKQKGTGRARA).

This sequence belongs to the universal ribosomal protein uL4 family. As to quaternary structure, part of the 50S ribosomal subunit.

One of the primary rRNA binding proteins, this protein initially binds near the 5'-end of the 23S rRNA. It is important during the early stages of 50S assembly. It makes multiple contacts with different domains of the 23S rRNA in the assembled 50S subunit and ribosome. Its function is as follows. Forms part of the polypeptide exit tunnel. The polypeptide is Large ribosomal subunit protein uL4 (Leuconostoc citreum (strain KM20)).